A 1654-amino-acid chain; its full sequence is Cortactin-binding protein 2 (1654 aa).

The tract at residues 1–31 (MATDGASCEPDFSRSPEDAAGATAEPAKKEF) is disordered. Residues 119-276 (RKMQERMSTQ…EQLKRGSDSK (158 aa)) are a coiled coil. Disordered stretches follow at residues 361–432 (SHGD…LHSP), 455–480 (GNAN…PTSR), and 495–596 (QALS…PQGN). The segment covering 368–379 (SSVPAAPTPSAS) has biased composition (low complexity). Polar residues-rich tracts occupy residues 384-395 (NGPSTGSAPDPT) and 411-422 (QTPGTAAQSYSQ). Arg-499 carries the post-translational modification Asymmetric dimethylarginine. Residues 518-531 (DVSSHTPVSRTSLK) are compositionally biased toward polar residues. 6 ANK repeats span residues 710-740 (GRPT…DINY), 744-773 (DGHS…QVNA), 777-806 (NGFT…NINH), 810-839 (GGQT…DRSV), 843-872 (DGWT…PIPG), and 913-943 (EGWT…EPER). The segment at 1454-1478 (GAWRKVSTSPRKKSGHFSSPVWNKP) is disordered. Ser-1523 carries the post-translational modification Phosphoserine. Residues 1556–1654 (RRLHSSGNNP…KEEIWNLRKK (99 aa)) are disordered. A compositionally biased stretch (polar residues) spans 1581–1598 (KEVSPLSSHQTTECSNNK). Residues 1623–1637 (SQNTKRSSSSSNTRQ) show a composition bias toward low complexity. Residues 1644-1654 (SKEEIWNLRKK) are compositionally biased toward basic and acidic residues.

In terms of assembly, interacts with CTTN/cortactin SH3 domain. Interacts with STRN, STRN4/zinedin and MOB4/phocein; this interactions mediate the association with the STRIPAK core complex and may regulate dendritic spine distribution of the STRIPAK complex in hippocampal neurons. Activation of glutamate receptors weakens the interaction with STRN and STRN4.

It is found in the cytoplasm. The protein resides in the cell cortex. The protein localises to the cell projection. It localises to the dendritic spine. In terms of biological role, regulates the dendritic spine distribution of CTTN/cortactin in hippocampal neurons, and thus controls dendritic spinogenesis and dendritic spine maintenance. Associates with the striatin-interacting phosphatase and kinase (STRIPAK) core complex to regulate dendritic spine distribution of the STRIPAK complex in hippocampal neurons. The protein is Cortactin-binding protein 2 (CTTNBP2) of Atelerix albiventris (Middle-African hedgehog).